The chain runs to 75 residues: UPF0352 protein VIBHAR_03027 (75 aa).

The protein belongs to the UPF0352 family.

This is UPF0352 protein VIBHAR_03027 from Vibrio campbellii (strain ATCC BAA-1116).